Consider the following 461-residue polypeptide: Porin AaxA (461 aa).

The N-terminal stretch at 1-22 (MSFRSILLTALLSLSFTNTMQA) is a signal peptide.

Belongs to the OprB family.

Its subcellular location is the cell outer membrane. Functionally, facilitates L-arginine uptake, as part of the AaxABC system. The arginine uptake by the bacterium in the macrophage may be a virulence factor against the host innate immune response. The protein is Porin AaxA (aaxA) of Chlamydia muridarum (strain MoPn / Nigg).